A 232-amino-acid chain; its full sequence is Phosphoribosylformylglycinamidine synthase subunit PurQ (232 aa).

Residues 2–232 (KIAILQFGGT…SMVDYITENF (231 aa)) form the Glutamine amidotransferase type-1 domain. Cysteine 86 (nucleophile) is an active-site residue. Residues histidine 203 and glutamate 205 contribute to the active site.

As to quaternary structure, part of the FGAM synthase complex composed of 1 PurL, 1 PurQ and 2 PurS subunits.

The protein resides in the cytoplasm. It carries out the reaction N(2)-formyl-N(1)-(5-phospho-beta-D-ribosyl)glycinamide + L-glutamine + ATP + H2O = 2-formamido-N(1)-(5-O-phospho-beta-D-ribosyl)acetamidine + L-glutamate + ADP + phosphate + H(+). The catalysed reaction is L-glutamine + H2O = L-glutamate + NH4(+). It participates in purine metabolism; IMP biosynthesis via de novo pathway; 5-amino-1-(5-phospho-D-ribosyl)imidazole from N(2)-formyl-N(1)-(5-phospho-D-ribosyl)glycinamide: step 1/2. Functionally, part of the phosphoribosylformylglycinamidine synthase complex involved in the purines biosynthetic pathway. Catalyzes the ATP-dependent conversion of formylglycinamide ribonucleotide (FGAR) and glutamine to yield formylglycinamidine ribonucleotide (FGAM) and glutamate. The FGAM synthase complex is composed of three subunits. PurQ produces an ammonia molecule by converting glutamine to glutamate. PurL transfers the ammonia molecule to FGAR to form FGAM in an ATP-dependent manner. PurS interacts with PurQ and PurL and is thought to assist in the transfer of the ammonia molecule from PurQ to PurL. This chain is Phosphoribosylformylglycinamidine synthase subunit PurQ, found in Methanosarcina barkeri (strain Fusaro / DSM 804).